A 312-amino-acid polypeptide reads, in one-letter code: Ornithine carbamoyltransferase (312 aa).

Residues 50–53 (STRT), Q77, R101, and 128–131 (HPCQ) contribute to the carbamoyl phosphate site. Residues N160, D224, and 228–229 (SM) contribute to the L-ornithine site. Residues 264 to 265 (CL) and R292 each bind carbamoyl phosphate.

It belongs to the aspartate/ornithine carbamoyltransferase superfamily. OTCase family.

The protein localises to the cytoplasm. The enzyme catalyses carbamoyl phosphate + L-ornithine = L-citrulline + phosphate + H(+). Its pathway is amino-acid biosynthesis; L-arginine biosynthesis; L-arginine from L-ornithine and carbamoyl phosphate: step 1/3. Reversibly catalyzes the transfer of the carbamoyl group from carbamoyl phosphate (CP) to the N(epsilon) atom of ornithine (ORN) to produce L-citrulline. The chain is Ornithine carbamoyltransferase from Leifsonia xyli subsp. xyli (strain CTCB07).